The following is a 142-amino-acid chain: Large ribosomal subunit protein uL13 (142 aa).

The protein belongs to the universal ribosomal protein uL13 family. As to quaternary structure, part of the 50S ribosomal subunit.

Functionally, this protein is one of the early assembly proteins of the 50S ribosomal subunit, although it is not seen to bind rRNA by itself. It is important during the early stages of 50S assembly. In Xanthomonas oryzae pv. oryzae (strain MAFF 311018), this protein is Large ribosomal subunit protein uL13.